Here is a 258-residue protein sequence, read N- to C-terminus: DNA repair protein RecO (258 aa).

The protein belongs to the RecO family.

Involved in DNA repair and RecF pathway recombination. The polypeptide is DNA repair protein RecO (Lactiplantibacillus plantarum (strain ATCC BAA-793 / NCIMB 8826 / WCFS1) (Lactobacillus plantarum)).